Here is a 136-residue protein sequence, read N- to C-terminus: Holo-[acyl-carrier-protein] synthase (136 aa).

2 residues coordinate Mg(2+): D7 and E53.

The protein belongs to the P-Pant transferase superfamily. AcpS family. Mg(2+) is required as a cofactor.

The protein localises to the cytoplasm. It carries out the reaction apo-[ACP] + CoA = holo-[ACP] + adenosine 3',5'-bisphosphate + H(+). Functionally, transfers the 4'-phosphopantetheine moiety from coenzyme A to a Ser of acyl-carrier-protein. In Roseiflexus castenholzii (strain DSM 13941 / HLO8), this protein is Holo-[acyl-carrier-protein] synthase.